The chain runs to 304 residues: Chromo domain-containing protein cec-1 (304 aa).

One can recognise a Chromo domain in the interval 8–66 (YTVESILEHRKKKGKSEFYIKWLGYDHTHNSWEPKENIVDPTLIEAFFTREAARKAEIK). Over residues 63–73 (AEIKAKKDKMA) the composition is skewed to basic and acidic residues. 2 disordered regions span residues 63–235 (AEIK…EIQL) and 248–304 (VEPA…AIIE). The segment covering 75–102 (GKKGASSKASASVSKASASTPARGAKAA) has biased composition (low complexity). Residues 106-116 (PPKKSPPKRQR) are compositionally biased toward basic residues. The segment covering 122–141 (IRPDSDTDEEHSSADKKSKA) has biased composition (basic and acidic residues). 3 stretches are compositionally biased toward acidic residues: residues 142–152 (EDEEEVEDDEE), 163–204 (EEPE…DVQL), and 212–233 (EEEE…EEEI). Low complexity predominate over residues 248–292 (VEPAVATPEPSEPSSSEKAVVENGSSSAAAGNSASKPEVSAVEVV). The span at 293 to 304 (TVEDDDDIAIIE) shows a compositional bias: acidic residues.

Its subcellular location is the nucleus. It is found in the chromosome. The chain is Chromo domain-containing protein cec-1 (cec-1) from Caenorhabditis elegans.